A 76-amino-acid polypeptide reads, in one-letter code: MAARRGRAKRRKVCYFTANGITHIDYKDVDLLRRFISERGKILPRRVTGTSAKYQRKLTIAIKRARTMALLPYVAD.

This sequence belongs to the bacterial ribosomal protein bS18 family. Part of the 30S ribosomal subunit. Forms a tight heterodimer with protein bS6.

Binds as a heterodimer with protein bS6 to the central domain of the 16S rRNA, where it helps stabilize the platform of the 30S subunit. In Oceanobacillus iheyensis (strain DSM 14371 / CIP 107618 / JCM 11309 / KCTC 3954 / HTE831), this protein is Small ribosomal subunit protein bS18.